We begin with the raw amino-acid sequence, 370 residues long: Protein-tyrosine sulfotransferase 1 (370 aa).

Topologically, residues 1–8 (MVGKLKQN) are cytoplasmic. Residues 9-25 (LLLACLVISSVTVFYLG) traverse the membrane as a helical; Signal-anchor for type II membrane protein segment. Over 26 to 370 (QHAMECHHRI…KEKPQTEQVE (345 aa)) the chain is Lumenal. N-linked (GlcNAc...) asparagine glycosylation occurs at N60. Residue 79-83 (RSGTT) coordinates 3'-phosphoadenylyl sulfate. C97 and C157 are disulfide-bonded. The active-site Proton donor/acceptor is E100. The tract at residues 102 to 106 (RVIPR) is interaction with peptide substrate. 3'-phosphoadenylyl sulfate contacts are provided by R184, S192, and R196. Residues C226 and C234 are joined by a disulfide bond. Y239 contributes to the 3'-phosphoadenylyl sulfate binding site. The N-linked (GlcNAc...) asparagine glycan is linked to N262. Residues 286–295 (STDQVIKPVN) and K301 each bind 3'-phosphoadenylyl sulfate.

This sequence belongs to the protein sulfotransferase family. In terms of assembly, homodimer. Can also form heterodimers with TPST2. N-glycosylated. Ubiquitous. Detected in heart, brain, lung, liver, spleen, kidney, skeletal muscle and testis.

The protein resides in the golgi apparatus membrane. It catalyses the reaction L-tyrosyl-[protein] + 3'-phosphoadenylyl sulfate = O-sulfo-L-tyrosine-[protein] + adenosine 3',5'-bisphosphate + H(+). In terms of biological role, catalyzes the O-sulfation of tyrosine residues within acidic motifs of polypeptides, using 3'-phosphoadenylyl sulfate (PAPS) as cosubstrate. The chain is Protein-tyrosine sulfotransferase 1 (Tpst1) from Mus musculus (Mouse).